Here is a 393-residue protein sequence, read N- to C-terminus: Serine/threonine-protein phosphatase 2A activator 1 (393 aa).

A disordered region spans residues 328–393 (EKEEESIEQA…TSFSRDRLRR (66 aa)). 2 stretches are compositionally biased toward polar residues: residues 335-356 (EQAN…TSTS) and 365-386 (SGNN…QTSF). A Phosphoserine modification is found at Ser341.

It belongs to the PTPA-type PPIase family. Interacts with the phosphatase PP2A-like catalytic subunits PPG1, PPH3 and SIT4. Forms a ternary complex with SIT4-TAP42.

It is found in the cytoplasm. The protein resides in the nucleus. The enzyme catalyses [protein]-peptidylproline (omega=180) = [protein]-peptidylproline (omega=0). Its function is as follows. PPIases accelerate the folding of proteins. It catalyzes the cis-trans isomerization of proline imidic peptide bonds in oligopeptides. Acts as a regulatory subunit for TAP42-associated PP2A-like phosphatases modulating their activity or substrate specificity, probably by inducing a conformational change in the catalytic subunit, a direct target of the PPIase. Can reactivate inactive phosphatase PP2A-phosphatase methylesterase complexes (PP2Ai) in presence of ATP and Mg(2+) by dissociating the inactive form from the complex. Involved in the regulation of cell cycle progression, mitotic spindle formation, bud morphogenesis and DNA repair. The chain is Serine/threonine-protein phosphatase 2A activator 1 (RRD1) from Saccharomyces cerevisiae (strain ATCC 204508 / S288c) (Baker's yeast).